A 506-amino-acid chain; its full sequence is RNA-splicing ligase RtcB homolog (506 aa).

Mn(2+) is bound by residues Asp120, Cys123, His228, His260, and His354. 227 to 231 (NHYAE) contacts GMP. GMP contacts are provided by residues 354–355 (HN), 403–406 (GGSM), Ser410, 429–432 (HGAG), and Lys505. His429 acts as the GMP-histidine intermediate in catalysis.

The protein belongs to the RtcB family. As to quaternary structure, catalytic component of the tRNA-splicing ligase complex. The cofactor is Mn(2+).

It carries out the reaction a 3'-end 3'-phospho-ribonucleotide-RNA + a 5'-end dephospho-ribonucleoside-RNA + GTP = a ribonucleotidyl-ribonucleotide-RNA + GMP + diphosphate. It catalyses the reaction a 3'-end 2',3'-cyclophospho-ribonucleotide-RNA + a 5'-end dephospho-ribonucleoside-RNA + GTP + H2O = a ribonucleotidyl-ribonucleotide-RNA + GMP + diphosphate + H(+). In terms of biological role, catalytic subunit of the tRNA-splicing ligase complex that acts by directly joining spliced tRNA halves to mature-sized tRNAs by incorporating the precursor-derived splice junction phosphate into the mature tRNA as a canonical 3',5'-phosphodiester. May act as an RNA ligase with broad substrate specificity, and may function toward other RNAs. This chain is RNA-splicing ligase RtcB homolog, found in Anopheles gambiae (African malaria mosquito).